The following is a 469-amino-acid chain: UDP-N-acetylmuramate--L-alanine ligase (469 aa).

113–119 (GTHGKTT) is a binding site for ATP.

This sequence belongs to the MurCDEF family.

The protein resides in the cytoplasm. The catalysed reaction is UDP-N-acetyl-alpha-D-muramate + L-alanine + ATP = UDP-N-acetyl-alpha-D-muramoyl-L-alanine + ADP + phosphate + H(+). The protein operates within cell wall biogenesis; peptidoglycan biosynthesis. In terms of biological role, cell wall formation. This Neisseria gonorrhoeae (strain ATCC 700825 / FA 1090) protein is UDP-N-acetylmuramate--L-alanine ligase.